A 135-amino-acid chain; its full sequence is CDGSH iron-sulfur domain-containing protein 2B (135 aa).

Over 1-37 (MMLESLARVFKVQLPAYLKRLPIPDSIAGFIRLTVLE) the chain is Lumenal. Residues 38–60 (WLRLLPFLGVLALLGYLAIRPFL) traverse the membrane as a helical segment. Over 61–135 (PKKKQQKDSL…GPLILKKKEV (75 aa)) the chain is Cytoplasmic. The [2Fe-2S] cluster site is built by Cys99, Cys101, Cys110, and His114.

It belongs to the CISD protein family. CISD2 subfamily. In terms of assembly, homodimer. Requires [2Fe-2S] cluster as cofactor.

It is found in the endoplasmic reticulum membrane. The protein localises to the mitochondrion outer membrane. In terms of biological role, regulator of autophagy that contributes to antagonize becn1-mediated cellular autophagy at the endoplasmic reticulum. Participates in the interaction of bcl2 with becn1 and is required for bcl2-mediated depression of endoplasmic reticulum Ca(2+) stores during autophagy. The protein is CDGSH iron-sulfur domain-containing protein 2B (cisd2-b) of Xenopus laevis (African clawed frog).